The sequence spans 528 residues: MSFVFAVPEMVAATASDLASLGAALSEATAAAAIPTTQVLAAAADEVSAAIAELFGAHGQEFQALSAQASAFHDRFVRALSAAAGWYVDAEAANAALVDTAATGASELGSGGRTALILGSTGTPRPPFDYMQQVYDRYIAPHYLGYAFSGLYTPAQFQPWTGIPSLTYDQSVAEGAGYLHTAIMQQVAAGNDVVVLGFSQGASVATLEMRHLASLPAGVAPSPDQLSFVLLGNPNNPNGGILARFPGLYLQSLGLTFNGATPDTDYATTIYTTQYDGFADFPKYPLNILADVNALLGIYYSHSLYYGLTPEQVASGIVLPVSSPDTNTTYILLPNEDLPLLQPLRGIVPEPLLDLIEPDLRAIIELGYDRTGYADVPTPAALFPVHIDPIAVPPQIGAAIGGPLTALDGLLDTVINDQLNPVVTSGIYQAGAELSVAAAGYGAPAGVTNAIFIGQQVLPILVEGPGALVTADTHYLVDAIQDLAAGDLSGFNQNLQLIPATNIALLVFAAGIPAVAAVAILTGQDFPV.

One can recognise a PE domain in the interval 1 to 93 (MSFVFAVPEM…AGWYVDAEAA (93 aa)). A linker region spans residues 94 to 143 (NAALVDTAATGASELGSGGRTALILGSTGTPRPPFDYMQQVYDRYIAPHY). Residues 149 to 369 (SGLYTPAQFQ…LRAIIELGYD (221 aa)) form the PE-PPE domain. Ser199 is an active-site residue. Residues 503 to 523 (IALLVFAAGIPAVAAVAILTG) traverse the membrane as a helical segment.

Belongs to the mycobacterial PE family.

It is found in the membrane. It catalyses the reaction a hexanoate ester + H2O = an aliphatic alcohol + hexanoate + H(+). The catalysed reaction is an octanoate ester + H2O = an aliphatic alcohol + octanoate + H(+). The enzyme catalyses a butanoate ester + H2O = an aliphatic alcohol + butanoate + H(+). With respect to regulation, esterase activity is significantly inhibited by the serine modifier phenylmethylsulfonyl fluoride (PMSF). Esterase that hydrolyzes short to medium chain fatty acid esters with the highest specific activity for p-nitrophenyl caproate (pNPC6). Has lower activity with p-nitrophenyl caprylate (pNPC8) and p-nitrophenyl butyrate (pNPC4). Has weak activity with p-nitrophenyl caprate (pNPC10) and p-nitrophenyl laurate (pNPC12). Does not possess lipolytic activity and cutinase activity. The protein is Esterase PE16 of Mycobacterium tuberculosis (strain ATCC 25618 / H37Rv).